The primary structure comprises 226 residues: MSRIYQDSALRNKAVQSARLPGTWDPATHQGGNGILLEGELVDVSRHSILDAHGRKERYYVLYIQPSCIHRRKFDPKGNEIEPNFSATRKVNTGFLMSSYKVEAKGDTDRLTLEALKSLVNKPQLLELTESLTPDQAVAFWMPESEMEVMELELGTGVRLKTRGDGPFIDSLAKLELGTVTKCNFAGDGKTGASWTDNIMAQKSSERNTAEIREQGDGAEDEEWDD.

Positions 202 to 226 (QKSSERNTAEIREQGDGAEDEEWDD) are disordered. The segment covering 204–216 (SSERNTAEIREQG) has biased composition (basic and acidic residues). A necessary and sufficient fopr interaction with ARPC2 region spans residues 211–226 (EIREQGDGAEDEEWDD). Acidic residues predominate over residues 217–226 (DGAEDEEWDD).

This sequence belongs to the Arpin family. In terms of assembly, associates with the Arp2/3 complex. Interacts with ARPC2; enhanced by activated RAC1. Interacts with ARPC5; the interaction is dependent on RAC1.

It localises to the cell projection. The protein resides in the lamellipodium. In terms of biological role, regulates actin polymerization by inhibiting the actin-nucleating activity of the Arp2/3 complex; the function is competitive with nucleation promoting factors. Participates in an incoherent feedforward loop at the lamellipodium tip where it inhibits the ARP2/2 complex in response to Rac signaling and where Rac also stimulates actin polymerization through the WAVE complex. Involved in steering cell migration by controlling its directional persistence. The sequence is that of Arpin (Arpin) from Mus musculus (Mouse).